A 196-amino-acid chain; its full sequence is MSTSGPITEFPAPGLRDPFRYITGHDAEGNAVFVQTDNGDHRAVMLGGAAAQNIIYSAGSNPIELTGNVDLEFAKNRPSLHIPNGVCVRMIDFAPGCKSNMHRALCMGIGTVCEGEVELTLGSGEKRILRPGDVSINRGAMHQWRNTSDEKPARMLYTLLDIKPLIVNGKQLDFDMGYLMKEYAEYDEGEGDKKAE.

Positions 92 to 156 constitute a Cupin type-2 domain; that stretch reads DFAPGCKSNM…TSDEKPARML (65 aa).

The protein belongs to the virC family.

Cupin-domain-containing oxidoreductase; part of the gene cluster that mediates the biosynthesis of sordarial, a salicylic aldehyde structurally related to the phytotoxin pyriculol. The most interesting aspect of this pathway is formation of an aromatic product from the highly reducing polyketide synthase srdA. SrdA synthesizes a reduced polyketide chain from one molecule of acetyl-CoA and five molecules of malonyl-CoA. The polyketide chain is then reductively released as an aldehyde. The oxidoreductases srdC, srdD and srdE then oxidize one of the hydroxy groups to facilitate the intramolecular aldol condensation, followed by dehydration to yield a salicylic aldehyde. This aldehyde can undergo facile reduction by endogenous reductases to yield the alcohol 1-hydroxy-2-hydroxymethyl-3-pent-1,3-dienylbenzene. The flavin-dependent srdI counteract against the propensity of the aldehydes to be reduced under physiological conditions and is responsible for reoxidizing 1-hydroxy-2-hydroxymethyl-3-pent-1,3-dienylbenzene back to the salicylic aldehyde. This salicylic aldehyde is then selectively epoxidized by the cupin-domain-containing oxidoreductase srdB to yield the epoxide, which can be hydrolyzed stereoselectively by the hydrolase srdG to give the final product sordarial. This chain is Cupin-domain-containing oxidoreductase srdB, found in Neurospora crassa (strain ATCC 24698 / 74-OR23-1A / CBS 708.71 / DSM 1257 / FGSC 987).